The following is a 303-amino-acid chain: Porphobilinogen deaminase (303 aa).

S-(dipyrrolylmethanemethyl)cysteine is present on Cys240.

Belongs to the HMBS family. In terms of assembly, monomer. Dipyrromethane serves as cofactor.

It catalyses the reaction 4 porphobilinogen + H2O = hydroxymethylbilane + 4 NH4(+). It participates in porphyrin-containing compound metabolism; protoporphyrin-IX biosynthesis; coproporphyrinogen-III from 5-aminolevulinate: step 2/4. Its function is as follows. Tetrapolymerization of the monopyrrole PBG into the hydroxymethylbilane pre-uroporphyrinogen in several discrete steps. In Stenotrophomonas maltophilia (strain R551-3), this protein is Porphobilinogen deaminase.